Reading from the N-terminus, the 554-residue chain is D-3-phosphoglycerate dehydrogenase (554 aa).

Residues 177 to 178, Asp-197, 256 to 258, and Asp-282 each bind NAD(+); these read KI and CSR. Arg-258 is an active-site residue. Residue Glu-287 is part of the active site. Catalysis depends on His-305, which acts as the Proton donor. Residue 305-308 coordinates NAD(+); sequence HLGA. One can recognise an ACT domain in the interval 482-554; that stretch reads MLFTLHRDMP…GIRDAYTVKL (73 aa).

Belongs to the D-isomer specific 2-hydroxyacid dehydrogenase family.

The enzyme catalyses (2R)-3-phosphoglycerate + NAD(+) = 3-phosphooxypyruvate + NADH + H(+). It catalyses the reaction (R)-2-hydroxyglutarate + NAD(+) = 2-oxoglutarate + NADH + H(+). It participates in amino-acid biosynthesis; L-serine biosynthesis; L-serine from 3-phospho-D-glycerate: step 1/3. Its function is as follows. Catalyzes the reversible oxidation of 3-phospho-D-glycerate to 3-phosphonooxypyruvate, the first step of the phosphorylated L-serine biosynthesis pathway. Also catalyzes the reversible oxidation of 2-hydroxyglutarate to 2-oxoglutarate. The protein is D-3-phosphoglycerate dehydrogenase (serA) of Synechocystis sp. (strain ATCC 27184 / PCC 6803 / Kazusa).